The sequence spans 356 residues: MKKHNYSAGPCILPQEVFEKSAQAILDFNHSGLSLLEISHRSKDFVAVMEEARALVLELLGLKGKGYQALFLAGGASLEFLMVPYNLMKENGKAAYLDTGTWASGAIKEAKHFGETVVIASSKEENYNHIPKNYSIPSDANYFHCTSNNTIFGTQMKSFPEVNIPVVCDMSSDIFSRVLDFSKFDLIYAGAQKNMGPAGTTLVIVKEEILGKTGRYIPSMLDYEKHIKAESMYNTPPVFPIYASLLTLQWLKNLGGISAIEKINNAKANLLYSEIDRNTLFKGTANAEDRSNMNATFLLNNKNHTELFDKMWAAAGISGLSGHRSVGGYRASMYNALPLESVQVLVNVMKELENKI.

Arg41 provides a ligand contact to L-glutamate. Pyridoxal 5'-phosphate contacts are provided by residues 76–77 (AS), Trp102, Thr150, Asp169, and Gln192. Lys193 carries the post-translational modification N6-(pyridoxal phosphate)lysine. Pyridoxal 5'-phosphate is bound at residue 234 to 235 (NT).

The protein belongs to the class-V pyridoxal-phosphate-dependent aminotransferase family. SerC subfamily. As to quaternary structure, homodimer. Pyridoxal 5'-phosphate serves as cofactor.

The protein resides in the cytoplasm. It catalyses the reaction O-phospho-L-serine + 2-oxoglutarate = 3-phosphooxypyruvate + L-glutamate. It carries out the reaction 4-(phosphooxy)-L-threonine + 2-oxoglutarate = (R)-3-hydroxy-2-oxo-4-phosphooxybutanoate + L-glutamate. It functions in the pathway amino-acid biosynthesis; L-serine biosynthesis; L-serine from 3-phospho-D-glycerate: step 2/3. Its pathway is cofactor biosynthesis; pyridoxine 5'-phosphate biosynthesis; pyridoxine 5'-phosphate from D-erythrose 4-phosphate: step 3/5. Functionally, catalyzes the reversible conversion of 3-phosphohydroxypyruvate to phosphoserine and of 3-hydroxy-2-oxo-4-phosphonooxybutanoate to phosphohydroxythreonine. The polypeptide is Phosphoserine aminotransferase (Flavobacterium psychrophilum (strain ATCC 49511 / DSM 21280 / CIP 103535 / JIP02/86)).